A 412-amino-acid chain; its full sequence is COP9 signalosome complex subunit 4 (412 aa).

In terms of domain architecture, PCI spans 216–378; that stretch reads EAAQRYYELS…GILHFEDSNP (163 aa).

The protein belongs to the CSN4 family. As to quaternary structure, component of the CSN complex, probably composed of csn-1, csn-2, csn-3, csn-4, csn-5, csn-6 and csn-7. Within the complex it probably interacts directly with csn-2 and csn-4. In the complex, it probably interacts directly with csn-1, csn-2, csn-3 and csn-6. Interacts with itself.

The protein resides in the cytoplasm. Its subcellular location is the nucleus. Functionally, component of the COP9 signalosome complex (CSN), a complex involved in various cellular and developmental processes. The CSN complex is an essential regulator of the ubiquitin (Ubl) conjugation pathway by mediating the deneddylation of the cullin subunits of the SCF-type E3 ligase complexes, leading to decrease the Ubl ligase activity of SCF. The CSN complex plays an essential role in embryogenesis and oogenesis and is required to regulate microtubule stability in the early embryo. Mediates mei-3/katanin targeting for degradation at the meiosis to mitosis transition via deneddylation of cul-3. The polypeptide is COP9 signalosome complex subunit 4 (csn-4) (Caenorhabditis elegans).